The sequence spans 69 residues: Putative F-box protein At2g33705 (69 aa).

Residues 14 to 59 (GVNLEQIPYDLVLEILLKLSAKSIARFRCVSKLWDSTFRSRYFTEL) enclose the F-box domain.

The protein is Putative F-box protein At2g33705 of Arabidopsis thaliana (Mouse-ear cress).